The primary structure comprises 103 residues: Stefin-2 (103 aa).

The Secondary area of contact motif lies at 52-56 (QVVQG).

It belongs to the cystatin family.

Its subcellular location is the cytoplasm. Functionally, this is an intracellular thiol proteinase inhibitor. In Mus musculus (Mouse), this protein is Stefin-2 (Stfa2).